The following is a 309-amino-acid chain: Ferrochelatase (309 aa).

Fe cation contacts are provided by H187 and E265.

The protein belongs to the ferrochelatase family.

It localises to the cytoplasm. It catalyses the reaction heme b + 2 H(+) = protoporphyrin IX + Fe(2+). It functions in the pathway porphyrin-containing compound metabolism; protoheme biosynthesis; protoheme from protoporphyrin-IX: step 1/1. In terms of biological role, catalyzes the ferrous insertion into protoporphyrin IX. The chain is Ferrochelatase from Nitratiruptor sp. (strain SB155-2).